The following is a 57-amino-acid chain: Potassium channel toxin alpha-KTx 26.3 (57 aa).

Positions Met1–Ser15 are cleaved as a signal peptide. Residues Val16–Ser24 constitute a propeptide that is removed on maturation. 3 disulfide bridges follow: Cys30/Cys48, Cys34/Cys53, and Cys38/Cys55.

The protein belongs to the short scorpion toxin superfamily. Potassium channel inhibitor family. Alpha-KTx 26 subfamily. In terms of tissue distribution, expressed by the venom gland.

Its subcellular location is the secreted. Recombinant toxin that reversibly inhibits the potassium current of mKv1.3/KCNA3 channel stably expressed in COS7 cells (IC(50)=150 nM). In Mesobuthus gibbosus (Mediterranean checkered scorpion), this protein is Potassium channel toxin alpha-KTx 26.3.